The chain runs to 320 residues: Olfactory receptor 13C8 (320 aa).

Residues 1 to 25 are Extracellular-facing; it reads MERTNDSTSTEFFLVGLSAHPKLQT. N-linked (GlcNAc...) asparagine glycosylation occurs at Asn5. A helical transmembrane segment spans residues 26-46; the sequence is VFFVLILWMYLMILLGNGVLI. The Cytoplasmic portion of the chain corresponds to 47 to 54; it reads SVIIFDSH. The chain crosses the membrane as a helical span at residues 55 to 75; that stretch reads LHTPMYFFLCNLSFLDVCYTS. The Extracellular portion of the chain corresponds to 76–99; that stretch reads SSVPLILASFLAVKKKVSFSGCMV. A disulfide bond links Cys97 and Cys189. The helical transmembrane segment at 100 to 120 threads the bilayer; that stretch reads QMFISFAMGATECMILGTMAL. Residues 121–139 lie on the Cytoplasmic side of the membrane; that stretch reads DRYVAICYPLRYPVIMSKG. The helical transmembrane segment at 140–160 threads the bilayer; the sequence is AYVAMAAGSWVTGLVDSVVQT. Residues 161–197 are Extracellular-facing; the sequence is AFAMQLPFCANNVIKHFVCEILAILKLACADISINVI. Residues 198-217 traverse the membrane as a helical segment; that stretch reads SMTGSNLIVLVIPLLVISIS. Over 218–237 the chain is Cytoplasmic; that stretch reads YIFIVATILRIPSTEGKHKA. Residues 238–258 traverse the membrane as a helical segment; the sequence is FSTCSAHLTVVIIFYGTIFFM. Residues 259-277 are Extracellular-facing; it reads YAKPESKASVDSGNEDIIE. Residues 278 to 298 traverse the membrane as a helical segment; sequence ALISLFYGVMTPMLNPLIYSL. Residues 299–320 are Cytoplasmic-facing; the sequence is RNKDVKAAVKNILCRKNFSDGK.

This sequence belongs to the G-protein coupled receptor 1 family.

It is found in the cell membrane. Its function is as follows. Odorant receptor. This Homo sapiens (Human) protein is Olfactory receptor 13C8 (OR13C8).